We begin with the raw amino-acid sequence, 503 residues long: Probable cytosol aminopeptidase (503 aa).

Mn(2+) contacts are provided by Lys-270 and Asp-275. Lys-282 is a catalytic residue. Residues Asp-293, Asp-352, and Glu-354 each contribute to the Mn(2+) site. Arg-356 is an active-site residue.

This sequence belongs to the peptidase M17 family. The cofactor is Mn(2+).

It is found in the cytoplasm. It catalyses the reaction Release of an N-terminal amino acid, Xaa-|-Yaa-, in which Xaa is preferably Leu, but may be other amino acids including Pro although not Arg or Lys, and Yaa may be Pro. Amino acid amides and methyl esters are also readily hydrolyzed, but rates on arylamides are exceedingly low.. The catalysed reaction is Release of an N-terminal amino acid, preferentially leucine, but not glutamic or aspartic acids.. In terms of biological role, presumably involved in the processing and regular turnover of intracellular proteins. Catalyzes the removal of unsubstituted N-terminal amino acids from various peptides. The protein is Probable cytosol aminopeptidase of Sodalis glossinidius (strain morsitans).